Reading from the N-terminus, the 579-residue chain is Type II restriction enzyme FokI (579 aa).

Residues aspartate 450, aspartate 467, and lysine 469 contribute to the active site.

Monomer, in which form it can cleave DNA. Homodimer when bound to DNA. Mg(2+) serves as cofactor.

The catalysed reaction is Endonucleolytic cleavage of DNA to give specific double-stranded fragments with terminal 5'-phosphates.. Its function is as follows. An S subtype restriction enzyme that recognizes the asymmetric double-stranded sequence 5'-GGATG-3' and cleaves respectively 14 bases after G-1 (top strand) and 13 bases before C-1 (bottom strand). This is Type II restriction enzyme FokI from Planomicrobium okeanokoites (Planococcus okeanokoites).